Here is a 154-residue protein sequence, read N- to C-terminus: Anaerobic ribonucleoside-triphosphate reductase-activating protein (154 aa).

3 residues coordinate [4Fe-4S] cluster: Cys26, Cys30, and Cys33. Residues 32 to 34 (GCY) and Gly74 each bind S-adenosyl-L-methionine.

The protein belongs to the organic radical-activating enzymes family. As to quaternary structure, forms a tetramer composed of two NrdD and two NrdG subunits. [4Fe-4S] cluster serves as cofactor.

It localises to the cytoplasm. It catalyses the reaction glycyl-[protein] + reduced [flavodoxin] + S-adenosyl-L-methionine = glycin-2-yl radical-[protein] + semiquinone [flavodoxin] + 5'-deoxyadenosine + L-methionine + H(+). Its function is as follows. Activation of anaerobic ribonucleoside-triphosphate reductase under anaerobic conditions by generation of an organic free radical, using S-adenosylmethionine and reduced flavodoxin as cosubstrates to produce 5'-deoxy-adenosine. This Escherichia coli O157:H7 protein is Anaerobic ribonucleoside-triphosphate reductase-activating protein (nrdG).